Reading from the N-terminus, the 267-residue chain is Lectin SfL-2 (267 aa).

Repeat copies occupy residues 1–67 (GRYT…RRGE), 68–135 (SNNY…QAEG), 136–202 (DTYN…LTGA), and 203–267 (NNYK…GVAN). A 4 X approximate tandem repeats region spans residues 1–267 (GRYTVQNQWG…GPIGFKGVAN (267 aa)).

In terms of assembly, monomer.

Its function is as follows. Lectin specific for high mannose N-glycans, recognizes the branched moiety of these glycans. Does not recognize other types of N-glycans or monosaccharides. The chain is Lectin SfL-2 from Solieria filiformis (Red alga).